A 381-amino-acid polypeptide reads, in one-letter code: Metacaspase-8 (381 aa).

Residues His86 and Cys140 contribute to the active site. S-nitrosocysteine is present on Cys140.

This sequence belongs to the peptidase C14B family. Proteolytically processed; by an autocatalytic mechanism.

Its function is as follows. Cysteine protease that cleaves specifically after arginine residues. Does not cleave caspase-specific substrates. May be involved in the modulation of programmed cell death activated by oxidative stress. The polypeptide is Metacaspase-8 (AMC8) (Arabidopsis thaliana (Mouse-ear cress)).